Consider the following 234-residue polypeptide: RNA-binding protein pno1 (234 aa).

The disordered stretch occupies residues 1–39 (MPTQDSAAKQADDGFQLVQKKSRKRKMTMDMDDADPKAG). One can recognise a KH domain in the interval 158-207 (LARCIGRLAGKGGRTKFTIENVTKTRIVLADSKVHILGSYQNIRAARTAL).

Belongs to the PNO1 family.

Its subcellular location is the nucleus. It localises to the nucleolus. The polypeptide is RNA-binding protein pno1 (Ixodes scapularis (Black-legged tick)).